Reading from the N-terminus, the 407-residue chain is Probable peptidoglycan glycosyltransferase FtsW (407 aa).

Residues 1–25 are Cytoplasmic-facing; sequence MSIDFRNIIKPYPSPIITGRGIDLD. A helical transmembrane segment spans residues 26–46; it reads FPMLAGCLALLGLGLVMITSA. The Periplasmic segment spans residues 47–65; it reads SSEVAAVQSGNTLYMMIRH. Residues 66-86 traverse the membrane as a helical segment; the sequence is LVYLVIGLGACIVTMMIPIAT. At 87-89 the chain is on the cytoplasmic side; that stretch reads WQR. The helical transmembrane segment at 90-110 threads the bilayer; it reads LGWLMLIGAFGLLIMVILPGI. Residues 111-119 lie on the Periplasmic side of the membrane; the sequence is GREVNGSMR. Residues 120–140 form a helical membrane-spanning segment; the sequence is WIGFGAFNVQPSEIAKVFVVI. At 141-155 the chain is on the cytoplasmic side; it reads YLAGYLVRRQKEVRE. Residues 156–176 traverse the membrane as a helical segment; the sequence is SWMGFFKPFIVLLPMAGLLLM. Residues 177–181 are Periplasmic-facing; the sequence is EPDFG. The helical transmembrane segment at 182–202 threads the bilayer; that stretch reads ATVVMMGAAAAMLFLGGVGLF. Residue Arg-203 is a topological domain, cytoplasmic. A helical transmembrane segment spans residues 204-224; that stretch reads FTLMVVLAVAAVTVLVQAQPY. The Periplasmic portion of the chain corresponds to 225 to 283; that stretch reads RMARLITFTDPWSDQFGSGYQLTQALIAFGRGEWLGVGLGNSVQKQFYLPEAHTDFVFS. Residues 284–304 traverse the membrane as a helical segment; it reads VLAEELGVVGSLCTVALFVFV. The Cytoplasmic portion of the chain corresponds to 305–321; sequence CVRGMYIGMWAEKAKQY. Residues 322 to 342 traverse the membrane as a helical segment; that stretch reads FAAYVAYGLSFLWIGQFLINI. At 343–355 the chain is on the periplasmic side; that stretch reads GVNVGLLPTKGLT. The chain crosses the membrane as a helical span at residues 356-376; the sequence is LPFLSYGGSSLVICCACLGLL. Residues 377 to 407 lie on the Cytoplasmic side of the membrane; it reads LRIEWESRTHLGSEEMEFSESDFAEEPTHGR.

The protein belongs to the SEDS family. FtsW subfamily.

Its subcellular location is the cell inner membrane. It carries out the reaction [GlcNAc-(1-&gt;4)-Mur2Ac(oyl-L-Ala-gamma-D-Glu-L-Lys-D-Ala-D-Ala)](n)-di-trans,octa-cis-undecaprenyl diphosphate + beta-D-GlcNAc-(1-&gt;4)-Mur2Ac(oyl-L-Ala-gamma-D-Glu-L-Lys-D-Ala-D-Ala)-di-trans,octa-cis-undecaprenyl diphosphate = [GlcNAc-(1-&gt;4)-Mur2Ac(oyl-L-Ala-gamma-D-Glu-L-Lys-D-Ala-D-Ala)](n+1)-di-trans,octa-cis-undecaprenyl diphosphate + di-trans,octa-cis-undecaprenyl diphosphate + H(+). It functions in the pathway cell wall biogenesis; peptidoglycan biosynthesis. Peptidoglycan polymerase that is essential for cell division. The chain is Probable peptidoglycan glycosyltransferase FtsW from Pseudomonas fluorescens (strain SBW25).